The sequence spans 518 residues: Pumilio homolog 14 (518 aa).

Disordered regions lie at residues 26–46 (TMAS…QPEN) and 77–114 (VGQN…PPMG). Residues 29 to 44 (SSSSQPQPISSPFHQP) show a composition bias toward low complexity. The 341-residue stretch at 178–518 (YTNRFGYEGY…GNKVLEKLNI (341 aa)) folds into the PUM-HD domain. The Pumilio 1; degenerate repeat unit spans residues 206–235 (SAFAKDKEMSERLGMSIFQGTKETVDAIYN). Pumilio repeat units follow at residues 236 to 271 (GLIG…QLVD), 275 to 313 (QQMF…RIVD), 314 to 348 (VVRT…LLLE), 349 to 387 (LIVQ…RLIM), 388 to 423 (EAIA…ALVR), 424 to 459 (QLIG…IVID), and 460 to 494 (LLRE…MLRY).

The protein resides in the cytoplasm. It localises to the nucleus. Functionally, sequence-specific RNA-binding protein that regulates translation and mRNA stability by binding the 3'-UTR of target mRNAs. In Arabidopsis thaliana (Mouse-ear cress), this protein is Pumilio homolog 14 (APUM14).